A 356-amino-acid polypeptide reads, in one-letter code: Acyl-coenzyme A diphosphatase NUDT19 (356 aa).

In terms of domain architecture, Nudix hydrolase spans 10–241 (AATVMLAAGW…IWLAPPQFYE (232 aa)). The interval 72-94 (PRFGLGPEPPRQPPFPGLSHGDA) is disordered. Residues 78-87 (PEPPRQPPFP) show a composition bias toward pro residues. The Nudix box motif lies at 97–118 (AALPDDVALRICAIRETFEEAG). Mg(2+) is bound by residues Glu112 and Glu116. Lys299 is subject to N6-succinyllysine. The short motif at 354 to 356 (ARL) is the Microbody targeting signal element.

This sequence belongs to the Nudix hydrolase family. Monomer. It depends on Mg(2+) as a cofactor. Mn(2+) is required as a cofactor.

The protein resides in the peroxisome. The catalysed reaction is an acyl-CoA + H2O = an acyl-4'-phosphopantetheine + adenosine 3',5'-bisphosphate + 2 H(+). It carries out the reaction CoA + H2O = (R)-4'-phosphopantetheine + adenosine 3',5'-bisphosphate + 2 H(+). It catalyses the reaction hexanoyl-CoA + H2O = hexanoyl-4'-phosphopantetheine + adenosine 3',5'-bisphosphate + 2 H(+). The enzyme catalyses octanoyl-CoA + H2O = S-octanoyl-4'-phosphopantetheine + adenosine 3',5'-bisphosphate + 2 H(+). The catalysed reaction is butanoyl-CoA + H2O = S-butanoyl-4'-phosphopantetheine + adenosine 3',5'-bisphosphate + 2 H(+). It carries out the reaction propanoyl-CoA + H2O = propanoyl-4'-phosphopantetheine + adenosine 3',5'-bisphosphate + 2 H(+). It catalyses the reaction malonyl-CoA + H2O = malonyl-4'-phosphopantetheine + adenosine 3',5'-bisphosphate + 2 H(+). The enzyme catalyses succinyl-CoA + H2O = succinyl-4'-phosphopantetheine + adenosine 3',5'-bisphosphate + 2 H(+). The catalysed reaction is choloyl-CoA + H2O = S-choloyl-4'-phosphopantetheine + adenosine 3',5'-bisphosphate + 2 H(+). It carries out the reaction 4,8-dimethylnonanoyl-CoA + H2O = S-(4,8-dimethylnonanoyl)-4'-phosphopantetheine + adenosine 3',5'-bisphosphate + 2 H(+). It catalyses the reaction (9Z,12Z,15Z)-octadecatrienoyl-CoA + H2O = S-(9Z,12Z,15Z-octadecatrienoyl)-4'-phosphopantetheine + adenosine 3',5'-bisphosphate + 2 H(+). The enzyme catalyses (9Z,12Z)-octadecadienoyl-CoA + H2O = S-(9Z,12Z-octadecadienoyl)-4'-phosphopantetheine + adenosine 3',5'-bisphosphate + 2 H(+). The catalysed reaction is (9Z)-hexadecenoyl-CoA + H2O = S-(9Z-hexadecenoyl)-4'-phosphopantetheine + adenosine 3',5'-bisphosphate + 2 H(+). It carries out the reaction (9Z)-tetradecenoyl-CoA + H2O = S-(9Z-tetradecenoyl)-4'-phosphopantetheine + adenosine 3',5'-bisphosphate + 2 H(+). It catalyses the reaction (6Z)-octenoyl-CoA + H2O = S-(6Z-octenoyl)-4'-phosphopantetheine + adenosine 3',5'-bisphosphate + 2 H(+). The enzyme catalyses hexadecanoyl-CoA + H2O = S-hexadecanoyl-4'-phosphopantetheine + adenosine 3',5'-bisphosphate + 2 H(+). The catalysed reaction is tetradecanoyl-CoA + H2O = tetradecanoyl-4'-phosphopantetheine + adenosine 3',5'-bisphosphate + 2 H(+). It carries out the reaction dodecanoyl-CoA + H2O = S-dodecanoyl-4'-phosphopantetheine + adenosine 3',5'-bisphosphate + 2 H(+). It catalyses the reaction a 5'-end CoA-ribonucleoside in mRNA + H2O = a 5'-end phospho-adenosine-phospho-ribonucleoside in mRNA + (R)-4'-phosphopantetheine + 2 H(+). In terms of biological role, fatty acyl-coenzyme A (CoA) diphosphatase that hydrolyzes fatty acyl-CoA to yield acyl-4'-phosphopantetheine and adenosine 3',5'-bisphosphate. Mediates the hydrolysis of a wide range of CoA esters, including choloyl-CoA and branched-chain fatty-acyl-CoA esters and at low substrate concentrations medium and long-chain fatty-acyl-CoA esters are the primary substrates. Highest activity seen with medium-chain acyl-CoA esters and higher rates of activity seen with the unsaturated acyl-CoA esters compared with the saturated esters. Exhibits decapping activity towards dpCoA-capped RNAs in vitro. This Mus saxicola (Brown spiny mouse) protein is Acyl-coenzyme A diphosphatase NUDT19 (Nudt19).